The chain runs to 120 residues: Small ribosomal subunit protein uS13 (120 aa).

The interval 96–120 is disordered; it reads PCRGQRTRTNARTRKGPRKAIAGKK.

The protein belongs to the universal ribosomal protein uS13 family. In terms of assembly, part of the 30S ribosomal subunit. Forms a loose heterodimer with protein S19. Forms two bridges to the 50S subunit in the 70S ribosome.

Functionally, located at the top of the head of the 30S subunit, it contacts several helices of the 16S rRNA. In the 70S ribosome it contacts the 23S rRNA (bridge B1a) and protein L5 of the 50S subunit (bridge B1b), connecting the 2 subunits; these bridges are implicated in subunit movement. Contacts the tRNAs in the A and P-sites. This chain is Small ribosomal subunit protein uS13, found in Chromobacterium violaceum (strain ATCC 12472 / DSM 30191 / JCM 1249 / CCUG 213 / NBRC 12614 / NCIMB 9131 / NCTC 9757 / MK).